Here is a 213-residue protein sequence, read N- to C-terminus: 3-isopropylmalate dehydratase small subunit (213 aa).

This sequence belongs to the LeuD family. LeuD type 1 subfamily. As to quaternary structure, heterodimer of LeuC and LeuD.

The enzyme catalyses (2R,3S)-3-isopropylmalate = (2S)-2-isopropylmalate. It participates in amino-acid biosynthesis; L-leucine biosynthesis; L-leucine from 3-methyl-2-oxobutanoate: step 2/4. Functionally, catalyzes the isomerization between 2-isopropylmalate and 3-isopropylmalate, via the formation of 2-isopropylmaleate. The polypeptide is 3-isopropylmalate dehydratase small subunit (Magnetococcus marinus (strain ATCC BAA-1437 / JCM 17883 / MC-1)).